Here is a 314-residue protein sequence, read N- to C-terminus: Ribonuclease Z (314 aa).

The Zn(2+) site is built by H60, H62, D64, H65, H140, D209, and H269. Catalysis depends on D64, which acts as the Proton acceptor.

It belongs to the RNase Z family. Homodimer. Requires Zn(2+) as cofactor.

It carries out the reaction Endonucleolytic cleavage of RNA, removing extra 3' nucleotides from tRNA precursor, generating 3' termini of tRNAs. A 3'-hydroxy group is left at the tRNA terminus and a 5'-phosphoryl group is left at the trailer molecule.. In terms of biological role, zinc phosphodiesterase, which displays some tRNA 3'-processing endonuclease activity. Probably involved in tRNA maturation, by removing a 3'-trailer from precursor tRNA. This Methanococcus maripaludis (strain C5 / ATCC BAA-1333) protein is Ribonuclease Z.